We begin with the raw amino-acid sequence, 325 residues long: Tetraacyldisaccharide 4'-kinase (325 aa).

T55–T62 provides a ligand contact to ATP.

The protein belongs to the LpxK family.

It carries out the reaction a lipid A disaccharide + ATP = a lipid IVA + ADP + H(+). It participates in glycolipid biosynthesis; lipid IV(A) biosynthesis; lipid IV(A) from (3R)-3-hydroxytetradecanoyl-[acyl-carrier-protein] and UDP-N-acetyl-alpha-D-glucosamine: step 6/6. Functionally, transfers the gamma-phosphate of ATP to the 4'-position of a tetraacyldisaccharide 1-phosphate intermediate (termed DS-1-P) to form tetraacyldisaccharide 1,4'-bis-phosphate (lipid IVA). This is Tetraacyldisaccharide 4'-kinase from Salmonella newport (strain SL254).